Consider the following 504-residue polypeptide: Biotinidase (504 aa).

Positions 1–20 are cleaved as a signal peptide; the sequence is MFSFGTVFTFALLLIPLTEA. The 280-residue stretch at 30 to 309 folds into the CN hydrolase domain; it reads YEHNLILNPD…GRLLVARVPV (280 aa). E79 (proton acceptor) is an active-site residue. N-linked (GlcNAc...) asparagine glycosylation is found at N86 and N117. The active-site Proton donor is the K181. C214 (nucleophile) is an active-site residue. 3 N-linked (GlcNAc...) asparagine glycosylation sites follow: N261, N365, and N375.

This sequence belongs to the carbon-nitrogen hydrolase superfamily. BTD/VNN family.

The protein localises to the secreted. It is found in the extracellular space. It catalyses the reaction biocytin + H2O = biotin + L-lysine. The catalysed reaction is biotin amide + H2O = biotin + NH4(+). Catalytic release of biotin from biocytin, the product of biotin-dependent carboxylases degradation. In Takifugu rubripes (Japanese pufferfish), this protein is Biotinidase (btd).